The sequence spans 191 residues: Chromobox protein homolog 5 (191 aa).

A disordered region spans residues Met1 to Val21. A phosphoserine mark is found at Ser11, Ser12, Ser13, and Ser14. Residues Tyr20–Asn78 enclose the Chromo 1 domain. Lys32 participates in a covalent cross-link: Glycyl lysine isopeptide (Lys-Gly) (interchain with G-Cter in SUMO2). Lys40 is modified (N6-acetyllysine). The disordered stretch occupies residues Tyr70–Phe117. The span at Met73–Lys89 shows a compositional bias: basic and acidic residues. Residue Lys91 forms a Glycyl lysine isopeptide (Lys-Gly) (interchain with G-Cter in SUMO2) linkage. Ser92, Ser93, Ser95, and Ser97 each carry phosphoserine. Glycyl lysine isopeptide (Lys-Gly) (interchain with G-Cter in SUMO2) cross-links involve residues Lys102, Lys106, Lys154, and Lys184. Residues Leu121–Glu179 form the Chromo 2; shadow subtype domain.

In terms of assembly, homodimer. Interacts with histone H3 methylated at 'Lys-9'. Interacts (via Chromo 2; shadow subtype domain) with the MIS12 complex subunit NSL1; the interaction is direct, involves dimeric CBX5, and occurs during interphase. Interacts with POGZ; POGZ and PXVXL motif-containing proteins such as INCENP and TRIM28 compete for interaction with CBX5. Interacts with LRIF1 (via PxVxL motif). Interacts with INCENP. Interacts with TRIM24. Interacts (via the chromoshadow domain) with ATRX; the interaction is direct. Interacts (via the chromoshadow domain) with CHAF1A; the interaction is direct. Interacts (via the chromoshadow domain) with LBR; the interaction is direct. Interacts (via the chromoshadow domain) with NIPBL; the interaction is direct. Interacts (via the chromoshadow domain) with SP100; the interaction is direct. Interacts (via the chromoshadow domain) with STAM2; the interaction is direct. Interacts (via the chromoshadow domain) with TRIM28; the interaction is direct. Interacts (via the chromoshadow domain) with CBX3; the interaction is direct. Interacts with PRR14 (via N-terminus). Interacts with RRP1B. Interacts with HNRNPU (via C-terminus); this interaction is, at least in part, RNA-dependent. Interacts with ZNF263; recruited to the SIX3 promoter along with other proteins involved in chromatin modification and transcriptional corepression where it contributes to transcriptional repression. Interacts with AURKB during mitosis. Interacts with CHAMP1. Interacts with BAHD1. Interacts with HP1BP3. Interacts with CHD3. Interacts with CHD4. Interacts with SMYD5. Interacts with KMT5B. Interacts with KMT5C. Post-translationally, phosphorylation of HP1 and LBR may be responsible for some of the alterations in chromatin organization and nuclear structure which occur at various times during the cell cycle. Phosphorylated during interphase and possibly hyper-phosphorylated during mitosis. Ubiquitinated.

The protein localises to the nucleus. It localises to the chromosome. The protein resides in the centromere. In terms of biological role, component of heterochromatin that recognizes and binds histone H3 tails methylated at 'Lys-9' (H3K9me), leading to epigenetic repression. In contrast, it is excluded from chromatin when 'Tyr-41' of histone H3 is phosphorylated (H3Y41ph). May contribute to the association of heterochromatin with the inner nuclear membrane by interactions with the lamin-B receptor (LBR). Involved in the formation of kinetochore through interaction with the MIS12 complex subunit NSL1. Required for the formation of the inner centromere. Its function is as follows. Component of heterochromatin that recognizes and binds histone H3 tails methylated at 'Lys-9' (H3K9me), leading to epigenetic repression. In contrast, it is excluded from chromatin when 'Tyr-41' of histone H3 is phosphorylated (H3Y41ph). Can interact with lamin-B receptor (LBR). This interaction can contribute to the association of the heterochromatin with the inner nuclear membrane. Involved in the formation of functional kinetochore through interaction with MIS12 complex proteins. This chain is Chromobox protein homolog 5 (Cbx5), found in Mus musculus (Mouse).